The sequence spans 396 residues: MSWSFLTRLLEEIHNHSTFVGKIWLTVLIVFRIVLTAVGGESIYYDEQSKFVCNTEQPGCENVCYDAFAPLSHVRFWVFQIILVATPSVMYLGYAIHKIAKMEHGEADKKAARSKPYAMRWKQHRALEETEEDHEEDPMMYPEMELESEKENKEQSQPKPKHDGRRRIREDGLMKIYVLQLLARTVFEVGFLIGQYFLYGFQVHPFYVCSRLPCPHKIDCFISRPTEKTIFLLIMYGVTGLCLLLNIWEMLHLGFGTIRDSLNSKRRELDDPGAYNYPFTWNTPSAPPGYNIAVKPDQIQYTELSNAKIAYKQNKANIAQEQQYGSHEEHLPADLETLQREIRMAQERLDLAIQAYHHQNNPHGPREKKAKVGSKSGSNKSSISSKSGDGKTSVWI.

The Cytoplasmic segment spans residues 1–18; sequence MSWSFLTRLLEEIHNHST. The helical transmembrane segment at 19–39 threads the bilayer; it reads FVGKIWLTVLIVFRIVLTAVG. Residues 40 to 75 are Extracellular-facing; it reads GESIYYDEQSKFVCNTEQPGCENVCYDAFAPLSHVR. Residues 76–96 form a helical membrane-spanning segment; it reads FWVFQIILVATPSVMYLGYAI. Residues 97–175 are Cytoplasmic-facing; the sequence is HKIAKMEHGE…RRIREDGLMK (79 aa). The disordered stretch occupies residues 145-165; the sequence is ELESEKENKEQSQPKPKHDGR. Basic and acidic residues predominate over residues 147–156; sequence ESEKENKEQS. Residues 176 to 198 traverse the membrane as a helical segment; sequence IYVLQLLARTVFEVGFLIGQYFL. Residues 199–229 lie on the Extracellular side of the membrane; the sequence is YGFQVHPFYVCSRLPCPHKIDCFISRPTEKT. Residues 230 to 250 traverse the membrane as a helical segment; the sequence is IFLLIMYGVTGLCLLLNIWEM. Over 251 to 396 the chain is Cytoplasmic; sequence LHLGFGTIRD…SGDGKTSVWI (146 aa). A coiled-coil region spans residues 303–358; the sequence is ELSNAKIAYKQNKANIAQEQQYGSHEEHLPADLETLQREIRMAQERLDLAIQAYHH. Positions 357–396 are disordered; the sequence is HHQNNPHGPREKKAKVGSKSGSNKSSISSKSGDGKTSVWI. Residues 373–396 show a composition bias toward low complexity; that stretch reads GSKSGSNKSSISSKSGDGKTSVWI.

The protein belongs to the connexin family. Gamma-type subfamily. In terms of assembly, a connexon is composed of a hexamer of connexins. Interacts with CNST.

The protein resides in the cell membrane. It localises to the cell junction. Its subcellular location is the gap junction. Its function is as follows. One gap junction consists of a cluster of closely packed pairs of transmembrane channels, the connexons, through which materials of low MW diffuse from one cell to a neighboring cell. The sequence is that of Gap junction gamma-1 protein (GJC1) from Cricetulus griseus (Chinese hamster).